The following is a 1383-amino-acid chain: DNA-directed RNA polymerase subunit beta (1383 aa).

This sequence belongs to the RNA polymerase beta chain family. The RNAP catalytic core consists of 2 alpha, 1 beta, 1 beta' and 1 omega subunit. When a sigma factor is associated with the core the holoenzyme is formed, which can initiate transcription.

The catalysed reaction is RNA(n) + a ribonucleoside 5'-triphosphate = RNA(n+1) + diphosphate. In terms of biological role, DNA-dependent RNA polymerase catalyzes the transcription of DNA into RNA using the four ribonucleoside triphosphates as substrates. This is DNA-directed RNA polymerase subunit beta from Bartonella quintana (strain Toulouse) (Rochalimaea quintana).